Here is a 182-residue protein sequence, read N- to C-terminus: MTRTAIEIPENVSAEVSNLALTVEGPNGSVTRTLWYPSVTVSVDEDADADAVVIETDETDAKTSATVGTFESHVSNMIHGVTDGWSYEMEVYYAHFPMQVSVEGDEVIIENFLGEKASRRTPIRGDTNVQIDGEMVTLTGPSKEDVGQTAADIEQLTRVTDKDTRIFQDGVYITQKPQQGGA.

It belongs to the universal ribosomal protein uL6 family. In terms of assembly, part of the 50S ribosomal subunit.

Its function is as follows. This protein binds to the 23S rRNA, and is important in its secondary structure. It is located near the subunit interface in the base of the L7/L12 stalk, and near the tRNA binding site of the peptidyltransferase center. The chain is Large ribosomal subunit protein uL6 from Haloquadratum walsbyi (strain DSM 16790 / HBSQ001).